Consider the following 194-residue polypeptide: 7-methyl-GTP pyrophosphatase (194 aa).

The active-site Proton acceptor is the aspartate 71.

This sequence belongs to the Maf family. YceF subfamily. It depends on a divalent metal cation as a cofactor.

It localises to the cytoplasm. It catalyses the reaction N(7)-methyl-GTP + H2O = N(7)-methyl-GMP + diphosphate + H(+). Its function is as follows. Nucleoside triphosphate pyrophosphatase that hydrolyzes 7-methyl-GTP (m(7)GTP). May have a dual role in cell division arrest and in preventing the incorporation of modified nucleotides into cellular nucleic acids. This is 7-methyl-GTP pyrophosphatase from Aromatoleum aromaticum (strain DSM 19018 / LMG 30748 / EbN1) (Azoarcus sp. (strain EbN1)).